Consider the following 168-residue polypeptide: Photosystem I assembly protein Ycf3 (168 aa).

TPR repeat units lie at residues 35 to 68 (AFTY…EIDP), 72 to 105 (SYIL…NPFL), and 120 to 153 (GEQA…TPGN).

It belongs to the Ycf3 family.

The protein localises to the plastid. The protein resides in the chloroplast thylakoid membrane. Functionally, essential for the assembly of the photosystem I (PSI) complex. May act as a chaperone-like factor to guide the assembly of the PSI subunits. This is Photosystem I assembly protein Ycf3 from Calycanthus floridus var. glaucus (Eastern sweetshrub).